A 431-amino-acid chain; its full sequence is GTPase Obg (431 aa).

An Obg domain is found at 1–158 (MFVDQVKISL…IEVTLELKLL (158 aa)). Positions 118–144 (KGGRGGRGNSRFASPRNPAPDFSENGE) are disordered. One can recognise an OBG-type G domain in the interval 159–330 (ADVGLVGFPS…LLYAIADKLE (172 aa)). GTP contacts are provided by residues 165–172 (GFPSVGKS), 190–194 (FTTIK), 212–215 (DLPG), 282–285 (NKMD), and 311–313 (STF). The Mg(2+) site is built by Ser172 and Thr192. Positions 353–431 (KHTPSQDKFT…ILGGEFEFVE (79 aa)) constitute an OCT domain.

This sequence belongs to the TRAFAC class OBG-HflX-like GTPase superfamily. OBG GTPase family. Monomer. The cofactor is Mg(2+).

Its subcellular location is the cytoplasm. Its function is as follows. An essential GTPase which binds GTP, GDP and possibly (p)ppGpp with moderate affinity, with high nucleotide exchange rates and a fairly low GTP hydrolysis rate. Plays a role in control of the cell cycle, stress response, ribosome biogenesis and in those bacteria that undergo differentiation, in morphogenesis control. In Staphylococcus saprophyticus subsp. saprophyticus (strain ATCC 15305 / DSM 20229 / NCIMB 8711 / NCTC 7292 / S-41), this protein is GTPase Obg.